The chain runs to 230 residues: Mitochondrial intermembrane space import and assembly protein 40 (230 aa).

The N-terminal 18 residues, 1 to 18 (MFARSFSNASRTIARRSL), are a transit peptide targeting the mitochondrion. Polar residues predominate over residues 1 to 22 (MFARSFSNASRTIARRSLSTRS). The interval 1 to 30 (MFARSFSNASRTIARRSLSTRSGPAPSSLW) is disordered. Topologically, residues 19–34 (STRSGPAPSSLWSSRN) are mitochondrial matrix. The chain crosses the membrane as a helical; Signal-anchor for type II membrane protein span at residues 35–51 (AVIAGTTLAITALAVTS). Residues 52-230 (ERRKVFNESA…EETAAPAAAP (179 aa)) lie on the Mitochondrial intermembrane side of the membrane. The tract at residues 58–111 (NESAQKATSPRDSIIAQDSLKENVHKKSVRQDEFSGESTKPEASTSSDSVEKAA) is disordered. The span at 59 to 68 (ESAQKATSPR) shows a compositional bias: polar residues. Basic and acidic residues predominate over residues 76 to 90 (SLKENVHKKSVRQDE). Positions 93-105 (GESTKPEASTSSD) are enriched in polar residues. Cystine bridges form between C144–C146, C155–C188, and C165–C178. Residues 152–196 (TGPCGEQFKAAFSCFVYSEAEPKGVDCVELFKVMQDCFREHPEIY) form the CHCH domain. 2 consecutive short sequence motifs (cx9C motif) follow at residues 155 to 165 (CGEQFKAAFSC) and 178 to 188 (CVELFKVMQDC). Residues 195 to 230 (IYGEEIDDDEAPAQEGTMEEKVEAAKEETAAPAAAP) form a disordered region. Over residues 196–206 (YGEEIDDDEAP) the composition is skewed to acidic residues. The span at 212–223 (MEEKVEAAKEET) shows a compositional bias: basic and acidic residues.

As to quaternary structure, monomer. Cu(2+) serves as cofactor. The cofactor is Zn(2+).

Its subcellular location is the mitochondrion inner membrane. Required for the import and folding of small cysteine-containing proteins (small Tim) in the mitochondrial intermembrane space (IMS). Forms a redox cycle with ERV1 that involves a disulfide relay system. Precursor proteins to be imported into the IMS are translocated in their reduced form into the mitochondria. The oxidized form of MIA40 forms a transient intermolecular disulfide bridge with the reduced precursor protein, resulting in oxidation of the precursor protein that now contains an intramolecular disulfide bond and is able to undergo folding in the IMS. The sequence is that of Mitochondrial intermembrane space import and assembly protein 40 (MIA40) from Cryptococcus neoformans var. neoformans serotype D (strain JEC21 / ATCC MYA-565) (Filobasidiella neoformans).